Here is a 339-residue protein sequence, read N- to C-terminus: Serine/threonine-protein kinase SAPK2 (339 aa).

The 257-residue stretch at 4–260 (YEVIKDIGSG…IPEIKNHPWF (257 aa)) folds into the Protein kinase domain. Residues 10-18 (IGSGNFGVA) and Lys-33 contribute to the ATP site. Asp-123 (proton acceptor) is an active-site residue. Residues 253–339 (EIKNHPWFLK…EDSGDFVCAL (87 aa)) are C-terminal.

Belongs to the protein kinase superfamily. Ser/Thr protein kinase family. In terms of processing, phosphorylated.

The catalysed reaction is L-seryl-[protein] + ATP = O-phospho-L-seryl-[protein] + ADP + H(+). It carries out the reaction L-threonyl-[protein] + ATP = O-phospho-L-threonyl-[protein] + ADP + H(+). Its function is as follows. May play a role in signal transduction of hyperosmotic response. Can phosphorylate BZIP46 in vitro. The polypeptide is Serine/threonine-protein kinase SAPK2 (SAPK2) (Oryza sativa subsp. indica (Rice)).